The primary structure comprises 670 residues: DNA ligase (670 aa).

NAD(+) contacts are provided by residues 33–37 (DAEYD), 82–83 (SL), and glutamate 114. The active-site N6-AMP-lysine intermediate is lysine 116. Arginine 137, glutamate 173, lysine 291, and lysine 315 together coordinate NAD(+). The Zn(2+) site is built by cysteine 409, cysteine 412, cysteine 427, and cysteine 433. In terms of domain architecture, BRCT spans 592-670 (VQSDRLSGNT…ENALAELLSD (79 aa)).

This sequence belongs to the NAD-dependent DNA ligase family. LigA subfamily. It depends on Mg(2+) as a cofactor. Requires Mn(2+) as cofactor.

It catalyses the reaction NAD(+) + (deoxyribonucleotide)n-3'-hydroxyl + 5'-phospho-(deoxyribonucleotide)m = (deoxyribonucleotide)n+m + AMP + beta-nicotinamide D-nucleotide.. In terms of biological role, DNA ligase that catalyzes the formation of phosphodiester linkages between 5'-phosphoryl and 3'-hydroxyl groups in double-stranded DNA using NAD as a coenzyme and as the energy source for the reaction. It is essential for DNA replication and repair of damaged DNA. The chain is DNA ligase from Idiomarina loihiensis (strain ATCC BAA-735 / DSM 15497 / L2-TR).